The primary structure comprises 283 residues: Poly(3-hydroxyalkanoate) depolymerase (283 aa).

Residues 30 to 253 (PLLIFNGIGA…IDDGHLFLIT (224 aa)) form the AB hydrolase-1 domain. Serine 102 acts as the Charge relay system in catalysis.

It belongs to the AB hydrolase superfamily. Lipase family.

Its function is as follows. Complements a mutant that does not degrade PHA; might be a lipase. The chain is Poly(3-hydroxyalkanoate) depolymerase from Ectopseudomonas oleovorans (Pseudomonas oleovorans).